We begin with the raw amino-acid sequence, 284 residues long: Tegument protein VP22 (284 aa).

2 disordered regions span residues 1–126 and 239–284; these read MSYY…WSID and LYAS…SRRR. A compositionally biased stretch (basic and acidic residues) spans 74–83; that stretch reads SRDDDDRRQP. The segment covering 94–108 has biased composition (basic residues); it reads ERRKSQTTVTTRRKT. The segment covering 115 to 126 has biased composition (polar residues); the sequence is KSSNSNGPWSID.

The protein belongs to the alphaherpesvirinae VP22 tegument protein family. As to quaternary structure, interacts with gE (via C-terminus); this interaction is necessary for the recruitment of VP22 to the Golgi and its packaging into virions. Interacts with gM (via C-terminus). Interacts with VP16; this interaction allows the formation of a tripartite complex composed of VP16, VP22 and UL41/VHS. Interacts with the capsid-binding protein UL16. Interacts with host CGAS. In terms of processing, highly phosphorylated in the host cell. Packaging is selective for underphosphorylated forms.

The protein localises to the virion tegument. It is found in the host cytoplasm. Its subcellular location is the host nucleus. The protein resides in the host Golgi apparatus. In terms of biological role, tegument protein that plays different roles during the time course of infection. Participates in both the accumulation of viral mRNAs and viral protein translation at late time of infection. Modulates the RNase activity of the virion host shutoff protein UL41 probably to ensure necessary levels of key cellular mRNAs and proteins. Plays a role in microtubule reorganization that occurs after viral infection by stabilizing microtubule network. Plays a role in the inhibition of host innate immune system by targeting the CGAS enzymatic activity which is the principal cytosolic DNA sensor that detects invading viral DNA. Acts by mediating disruption of liquid-like droplets in which CGAS is activated, thereby preventing CGAS activity. The chain is Tegument protein VP22 (UL49) from Amazona oratrix (yellow-headed parrot).